The primary structure comprises 178 residues: Inorganic pyrophosphatase (178 aa).

Positions 31, 45, and 57 each coordinate substrate. Mg(2+) contacts are provided by Asp67, Asp72, and Asp104. Tyr141 is a substrate binding site.

The protein belongs to the PPase family. Homohexamer. Requires Mg(2+) as cofactor.

The protein localises to the cytoplasm. The enzyme catalyses diphosphate + H2O = 2 phosphate + H(+). Its function is as follows. Catalyzes the hydrolysis of inorganic pyrophosphate (PPi) forming two phosphate ions. The sequence is that of Inorganic pyrophosphatase from Leptospira interrogans serogroup Icterohaemorrhagiae serovar copenhageni (strain Fiocruz L1-130).